The chain runs to 288 residues: Ankyrin repeat and SOCS box protein 8 (288 aa).

S17 is modified (phosphoserine). ANK repeat units lie at residues 52 to 81 (GTLK…EVNA), 85 to 113 (YNRT…NPNA), 117 to 146 (NRDT…SVNA), and 150 to 179 (NNDT…EVRV). In terms of domain architecture, SOCS box spans 235–288 (QLCEKLTVLCSAPGTLKTLARYAVRRSLGLQYLPDAVKGLPLPASLKEYLLLLE).

The protein belongs to the ankyrin SOCS box (ASB) family. In terms of assembly, interacts with TBK1; this interaction promotes TBK1 proteasomal degradation. Post-translationally, phosphorylated by TBK1.

Its subcellular location is the cytoplasm. It participates in protein modification; protein ubiquitination. Its function is as follows. May be a substrate-recognition component of a SCF-like ECS (Elongin-Cullin-SOCS-box protein) E3 ubiquitin-protein ligase complex which mediates the ubiquitination and subsequent proteasomal degradation of target proteins. Inhibits IFN-beta production through the IRF3 signaling pathway by targeting TBK1 via 'Lys-48'-linked ubiquitination, leading to its proteasomal degradation. The sequence is that of Ankyrin repeat and SOCS box protein 8 (ASB8) from Macaca fascicularis (Crab-eating macaque).